The following is an 843-amino-acid chain: Protein P (843 aa).

A terminal protein domain (TP) region spans residues M1 to Q177. The tract at residues E178–L346 is spacer. 2 disordered regions span residues S202–S221 and T285–G310. The tract at residues E347 to Q690 is polymerase/reverse transcriptase domain (RT). In terms of domain architecture, Reverse transcriptase spans Q357–I600. Positions 429, 551, and 552 each coordinate Mg(2+).

Belongs to the hepadnaviridae P protein family.

The catalysed reaction is DNA(n) + a 2'-deoxyribonucleoside 5'-triphosphate = DNA(n+1) + diphosphate. It catalyses the reaction Endonucleolytic cleavage to 5'-phosphomonoester.. Its activity is regulated as follows. Activated by host HSP70 and HSP40 in vitro to be able to bind the epsilon loop of the pgRNA. Because deletion of the RNase H region renders the protein partly chaperone-independent, the chaperones may be needed indirectly to relieve occlusion of the RNA-binding site by this domain. Inhibited by several reverse-transcriptase inhibitors: Lamivudine, Adefovir and Entecavir. Functionally, multifunctional enzyme that converts the viral RNA genome into dsDNA in viral cytoplasmic capsids. This enzyme displays a DNA polymerase activity that can copy either DNA or RNA templates, and a ribonuclease H (RNase H) activity that cleaves the RNA strand of RNA-DNA heteroduplexes in a partially processive 3'- to 5'-endonucleasic mode. Neo-synthesized pregenomic RNA (pgRNA) are encapsidated together with the P protein, and reverse-transcribed inside the nucleocapsid. Initiation of reverse-transcription occurs first by binding the epsilon loop on the pgRNA genome, and is initiated by protein priming, thereby the 5'-end of (-)DNA is covalently linked to P protein. Partial (+)DNA is synthesized from the (-)DNA template and generates the relaxed circular DNA (RC-DNA) genome. After budding and infection, the RC-DNA migrates in the nucleus, and is converted into a plasmid-like covalently closed circular DNA (cccDNA). The activity of P protein does not seem to be necessary for cccDNA generation, and is presumably released from (+)DNA by host nuclear DNA repair machinery. The chain is Protein P from Hepatitis B virus genotype F1 (isolate Argentina/sa11/2000) (HBV-F).